We begin with the raw amino-acid sequence, 322 residues long: Phosphatidylserine decarboxylase proenzyme (322 aa).

Active-site charge relay system; for autoendoproteolytic cleavage activity residues include aspartate 90, histidine 147, and serine 254. Serine 254 (schiff-base intermediate with substrate; via pyruvic acid; for decarboxylase activity) is an active-site residue. Serine 254 is subject to Pyruvic acid (Ser); by autocatalysis. Residues 293–322 (PDAEPAPLPAEEIEAEHDASPLVDDKKDQV) form a disordered region. Positions 308–322 (EHDASPLVDDKKDQV) are enriched in basic and acidic residues.

Belongs to the phosphatidylserine decarboxylase family. PSD-B subfamily. Prokaryotic type I sub-subfamily. As to quaternary structure, heterodimer of a large membrane-associated beta subunit and a small pyruvoyl-containing alpha subunit. Pyruvate is required as a cofactor. Is synthesized initially as an inactive proenzyme. Formation of the active enzyme involves a self-maturation process in which the active site pyruvoyl group is generated from an internal serine residue via an autocatalytic post-translational modification. Two non-identical subunits are generated from the proenzyme in this reaction, and the pyruvate is formed at the N-terminus of the alpha chain, which is derived from the carboxyl end of the proenzyme. The autoendoproteolytic cleavage occurs by a canonical serine protease mechanism, in which the side chain hydroxyl group of the serine supplies its oxygen atom to form the C-terminus of the beta chain, while the remainder of the serine residue undergoes an oxidative deamination to produce ammonia and the pyruvoyl prosthetic group on the alpha chain. During this reaction, the Ser that is part of the protease active site of the proenzyme becomes the pyruvoyl prosthetic group, which constitutes an essential element of the active site of the mature decarboxylase.

It is found in the cell membrane. The catalysed reaction is a 1,2-diacyl-sn-glycero-3-phospho-L-serine + H(+) = a 1,2-diacyl-sn-glycero-3-phosphoethanolamine + CO2. The protein operates within phospholipid metabolism; phosphatidylethanolamine biosynthesis; phosphatidylethanolamine from CDP-diacylglycerol: step 2/2. Its function is as follows. Catalyzes the formation of phosphatidylethanolamine (PtdEtn) from phosphatidylserine (PtdSer). The protein is Phosphatidylserine decarboxylase proenzyme of Escherichia coli O9:H4 (strain HS).